A 449-amino-acid polypeptide reads, in one-letter code: UDP-glycosyltransferase 76E7 (449 aa).

Residues S275, 333 to 335 (APQ), 350 to 358 (HCGWNSTLE), and 372 to 375 (TTDQ) contribute to the UDP-alpha-D-glucose site.

Belongs to the UDP-glycosyltransferase family.

This is UDP-glycosyltransferase 76E7 (UGT76E7) from Arabidopsis thaliana (Mouse-ear cress).